A 185-amino-acid chain; its full sequence is uncharacterized protein (185 aa).

Positions 1–29 are cleaved as a signal peptide; sequence MKNQEIIEVKSKMFLRIWAFVGSAGMGLA. Cys-30 is lipidated: N-palmitoyl cysteine. Cys-30 carries S-diacylglycerol cysteine lipidation. The helical transmembrane segment at 45-67 threads the bilayer; the sequence is YLLAIPAGFLFTLFCLYLFIIFF.

The protein to B.subtilis YfjE.

It is found in the cell membrane. This is an uncharacterized protein from Bacillus subtilis (strain 168).